The sequence spans 219 residues: MEREKQWIVRVVWRVSERQISRWRGIVTYKIRNKQLPWEYRHHWQVQWQFWTYSQFIIPLSKDDYIEVNIYHNLTPERGWLSSHGVGLSYYHQKGYKTEVDPGTADRMIHLYYFNCFTDRAIQQAIRGEKYTWCTFKEGHKGQVQSLQLLALVAYTNGIRKRSKRTFTRMAGNLGSRQGAMGRMATRHAQGSKRRSQKALWNEHANPSMELLCRGGKET.

T98 carries the post-translational modification Phosphothreonine; by host. The short motif at 110 to 140 is the HCCH motif element; sequence HLYYFNCFTDRAIQQAIRGEKYTWCTFKEGH. A Phosphoserine; by host modification is found at S146. The BC-box-like motif signature appears at 146–155; that stretch reads SLQLLALVAY. The interval 153 to 165 is multimerization; sequence VAYTNGIRKRSKR.

It belongs to the primate lentivirus group Vif protein family. In terms of assembly, homomultimer; in vitro and presumably in vivo. Interacts with viral Pr55Gag precursor and host APOBEC3G. The interaction between Vif and APOBEC3G is species-specific, which may play a role in restricting the replication of SIV to their host. Forms an E3 ligase complex by interacting with host CUL5 and elongin BC complex (ELOB and ELOC). Post-translationally, processed in virion by the viral protease. In terms of processing, highly phosphorylated on serine and threonine residues. Polyubiquitinated and degraded by the proteasome in the presence of APOBEC3G.

Its subcellular location is the host cytoplasm. The protein localises to the host cell membrane. The protein resides in the virion. Counteracts the innate antiviral activity of APOBEC3G. Forms a complex with host APOBEC3G thus preventing the entry of this lethally hypermutating enzyme into progeny virions. Functions as an adapter molecule, recruiting APOBEC3G to the ubiquitin-proteasome machinery. Targets APOBEC3G for degradation through the assembly with elongin BC complex, CUL5 and RBX1. Binds viral RNA and affects the stability of viral nucleoprotein core. May play a role in viral morphology. In Simian immunodeficiency virus agm.grivet (isolate AGM gr-1) (SIV-agm.gri), this protein is Virion infectivity factor (vif).